The sequence spans 88 residues: Large ribosomal subunit protein bL27 (88 aa).

The interval 1 to 22 (MAQKKAGGSSRNGRDSAGRRLG) is disordered.

Belongs to the bacterial ribosomal protein bL27 family.

The sequence is that of Large ribosomal subunit protein bL27 from Gluconobacter oxydans (strain 621H) (Gluconobacter suboxydans).